Reading from the N-terminus, the 219-residue chain is Cytidylate kinase (219 aa).

Residue 15-23 (GPAASGKGT) participates in ATP binding.

Belongs to the cytidylate kinase family. Type 1 subfamily.

It localises to the cytoplasm. The catalysed reaction is CMP + ATP = CDP + ADP. The enzyme catalyses dCMP + ATP = dCDP + ADP. The protein is Cytidylate kinase of Brucella abortus (strain S19).